The primary structure comprises 810 residues: MESFAPTRKGRAVFSADAAATAAPGSAGAGETLDPAKDALIIVPVRGFVLFPGIVMPVVLNGPAAIAAAQEAVRQQRSVGILMQRESGAEEASPLNMHRFGVVANILRYITAQDGGHHLICQGEQRFHVEEFLRERPYLAARVKRIEEPDERSPDIEARFVHLQGQASEALQLLPQTPPELIAAVNSAPSPGALTDLVAAYMDASPAQKQDILETIDLRARMDMVAKLLAQRIEVLRLSQEIGRQTKASLDERQREMLLREQMASIQRQLGEGDGKAQEIAELTEAIAKAKMPAEVEEAARKELRRLERMPDASAEYGMIRTYIDWLIELPWSLPEEAPIDIAEARRILDADHFGLDKIKQRIVEYLAVRKLAPQGKAPILCFVGPPGVGKTSLGQSIARAMGRKFVRVSLGGVHDEAEIRGHRRTYVGALPGNIIQAIRKAGARNCVMMLDEIDKMGASAHGDPGSAMLEVLDPEQNSTFRDNYLAVPFDLSRVVFIATANMLDTVPGPLRDRMEIIALTGYTDREKLEIARRYLVRRQLEANGLKPDQVEIDDDALIEIIRGYTREAGVRNLEREIGRVLRHVAVRIADGSASHVHVSRAELTELLGQQRFEDEVAMRLSVPGVATGLAWTPVGGDILFIEATRAPGHGKLTLTGQLGEVMRESVQAALSLIKSRAAELGVDPESFDKTDIHVHVPAGATPKDGPSAGVAMFIALVSILTGRLVRNDTAMTGEISLRGLVLPVGGIKEKVVAAARAGLTRVLLPARNRRDYDEIPQDTREKLEFVWLEKVDDAMAAAFEGMAATPAPN.

Residues 40 to 233 (LIIVPVRGFV…MVAKLLAQRI (194 aa)) enclose the Lon N-terminal domain. 385–392 (GPPGVGKT) lines the ATP pocket. Positions 621–802 (LSVPGVATGL…DDAMAAAFEG (182 aa)) constitute a Lon proteolytic domain. Active-site residues include S708 and K751.

Belongs to the peptidase S16 family. Homohexamer. Organized in a ring with a central cavity.

It is found in the cytoplasm. The enzyme catalyses Hydrolysis of proteins in presence of ATP.. Functionally, ATP-dependent serine protease that mediates the selective degradation of mutant and abnormal proteins as well as certain short-lived regulatory proteins. Required for cellular homeostasis and for survival from DNA damage and developmental changes induced by stress. Degrades polypeptides processively to yield small peptide fragments that are 5 to 10 amino acids long. Binds to DNA in a double-stranded, site-specific manner. The protein is Lon protease of Methylocella silvestris (strain DSM 15510 / CIP 108128 / LMG 27833 / NCIMB 13906 / BL2).